A 284-amino-acid chain; its full sequence is Putative ABC transporter ATP-binding protein MG468.1 homolog (284 aa).

The ABC transporter domain maps to 53 to 284 (VLFKGVCKAV…PKTINEINWV (232 aa)). Residue 89–96 (GKSGSGKT) participates in ATP binding.

Belongs to the ABC transporter superfamily.

This chain is Putative ABC transporter ATP-binding protein MG468.1 homolog, found in Mycoplasma pneumoniae (strain ATCC 29342 / M129 / Subtype 1) (Mycoplasmoides pneumoniae).